The chain runs to 164 residues: Monothiol glutaredoxin-S10 (164 aa).

In terms of domain architecture, Glutaredoxin spans 60–161; the sequence is EDSVKRTLAD…TMLSELDIDV (102 aa). C80 lines the [2Fe-2S] cluster pocket.

This sequence belongs to the glutaredoxin family. CPYC subfamily.

It localises to the cytoplasm. Functionally, may only reduce GSH-thiol disulfides, but not protein disulfides. The chain is Monothiol glutaredoxin-S10 (GRXS10) from Oryza sativa subsp. japonica (Rice).